The sequence spans 87 residues: Mitochondrial import inner membrane translocase subunit TIM8 (87 aa).

The short motif at 44–68 (CFKKCVESVNDSNLSSQEEQCLSNC) is the Twin CX3C motif element. 2 disulfide bridges follow: cysteine 44–cysteine 68 and cysteine 48–cysteine 64.

It belongs to the small Tim family. Heterohexamer; composed of 3 copies of TIM8 and 3 copies of TIM13, named soluble 70 kDa complex. Associates with the TIM22 complex, whose core is composed of TIM18, TIM22 and TIM54. Interacts with the transmembrane regions of multi-pass transmembrane proteins in transit.

It is found in the mitochondrion inner membrane. It localises to the mitochondrion intermembrane space. In terms of biological role, mitochondrial intermembrane chaperone that participates in the import and insertion of some multi-pass transmembrane proteins into the mitochondrial inner membrane. Also required for the transfer of beta-barrel precursors from the TOM complex to the sorting and assembly machinery (SAM complex) of the outer membrane. Acts as a chaperone-like protein that protects the hydrophobic precursors from aggregation and guide them through the mitochondrial intermembrane space. The TIM8-TIM13 complex is non essential and only mediates the import of few proteins under precise conditions, while the predominant TIM9-TIM10 70 kDa complex is crucial and mediates the import of much more proteins. Strictly required for import of TIM23 in some conditions, when a low membrane potential exists in the mitochondria. This chain is Mitochondrial import inner membrane translocase subunit TIM8 (TIM8), found in Saccharomyces cerevisiae (strain ATCC 204508 / S288c) (Baker's yeast).